Consider the following 135-residue polypeptide: Ribonuclease P protein component (135 aa).

The protein belongs to the RnpA family. As to quaternary structure, consists of a catalytic RNA component (M1 or rnpB) and a protein subunit.

It carries out the reaction Endonucleolytic cleavage of RNA, removing 5'-extranucleotides from tRNA precursor.. In terms of biological role, RNaseP catalyzes the removal of the 5'-leader sequence from pre-tRNA to produce the mature 5'-terminus. It can also cleave other RNA substrates such as 4.5S RNA. The protein component plays an auxiliary but essential role in vivo by binding to the 5'-leader sequence and broadening the substrate specificity of the ribozyme. In Pseudomonas aeruginosa (strain LESB58), this protein is Ribonuclease P protein component.